Consider the following 179-residue polypeptide: Replication restart protein DnaT (179 aa).

A compositionally biased stretch (polar residues) spans 151 to 168; sequence SRSSNGGMPQRDINSVSE. Positions 151 to 179 are disordered; sequence SRSSNGGMPQRDINSVSEPDNHIPPGFRG.

The protein belongs to the DnaT family. Homooligomerizes. Interacts with PriB. Component of the replication restart primosome. Primosome assembly occurs via a 'hand-off' mechanism. PriA binds to replication forks, subsequently PriB then DnaT bind; DnaT then displaces ssDNA to generate the helicase loading substrate.

In terms of biological role, involved in the restart of stalled replication forks, which reloads the replicative helicase on sites other than the origin of replication. Can function in multiple replication restart pathways. Displaces ssDNA from a PriB-ssDNA complex. Probably forms a spiral filament on ssDNA. This Salmonella schwarzengrund (strain CVM19633) protein is Replication restart protein DnaT.